Consider the following 245-residue polypeptide: tRNA1(Val) (adenine(37)-N6)-methyltransferase (245 aa).

This sequence belongs to the methyltransferase superfamily. tRNA (adenine-N(6)-)-methyltransferase family.

It is found in the cytoplasm. The catalysed reaction is adenosine(37) in tRNA1(Val) + S-adenosyl-L-methionine = N(6)-methyladenosine(37) in tRNA1(Val) + S-adenosyl-L-homocysteine + H(+). Functionally, specifically methylates the adenine in position 37 of tRNA(1)(Val) (anticodon cmo5UAC). This is tRNA1(Val) (adenine(37)-N6)-methyltransferase from Escherichia coli O7:K1 (strain IAI39 / ExPEC).